Reading from the N-terminus, the 311-residue chain is Acetaldehyde dehydrogenase (311 aa).

Cys-131 functions as the Acyl-thioester intermediate in the catalytic mechanism. NAD(+)-binding positions include 162-170 (SVGPGTRKN) and Asn-273.

It belongs to the acetaldehyde dehydrogenase family.

The enzyme catalyses acetaldehyde + NAD(+) + CoA = acetyl-CoA + NADH + H(+). This Ralstonia pickettii (strain 12J) protein is Acetaldehyde dehydrogenase.